A 441-amino-acid chain; its full sequence is Xaa-Pro dipeptidase (441 aa).

Mn(2+)-binding residues include aspartate 244, aspartate 255, histidine 336, glutamate 381, and glutamate 420.

This sequence belongs to the peptidase M24B family. Bacterial-type prolidase subfamily. Mn(2+) serves as cofactor.

It carries out the reaction Xaa-L-Pro dipeptide + H2O = an L-alpha-amino acid + L-proline. Splits dipeptides with a prolyl residue in the C-terminal position. This is Xaa-Pro dipeptidase from Xanthomonas campestris pv. campestris (strain 8004).